The primary structure comprises 660 residues: Polyadenylation factor subunit 2 (660 aa).

The span at 1 to 12 shows a compositional bias: basic and acidic residues; the sequence is MSYEPRGDHDKG. The disordered stretch occupies residues 1–32; it reads MSYEPRGDHDKGYGGGGGHDGLPPRNRGRRPV. 7 WD repeats span residues 94-133, 136-176, 177-216, 219-258, 261-301, 304-344, and 376-415; these read KIKHPINVVRWTPEGRRLLTASSSGEFTLWNGTGFNFETI, AHDS…ESIR, GHTDPIRDLAFSPNDTKFVTASDDQTLKVFDFAGGSTDMT, GHGWDAKSCDWHPSRGLIVSGSKDHLVKLWDPRTGRCLTT, GHKN…DIAL, GHEK…TAPD, and AHDFAIWSLDWHPLGHILASGSNDRITRFWSRARPGEAPE. A disordered region spans residues 562–660; sequence KAGYQPPPPP…QSKGNYTRVR (99 aa). The segment covering 566–610 has biased composition (pro residues); the sequence is QPPPPPGSAGAPMPPPGILPPGLIPPPGAAGFPMPPPGFAPPPLI.

It is found in the nucleus. Functionally, required for 3'-end cleavage and polyadenylation of pre-mRNAs. Also involved in chromosome segregation where it has a role in chromosome attachment to the mitotic spindle. This chain is Polyadenylation factor subunit 2 (paa-1), found in Neurospora crassa (strain ATCC 24698 / 74-OR23-1A / CBS 708.71 / DSM 1257 / FGSC 987).